A 180-amino-acid polypeptide reads, in one-letter code: Probable RNA 2'-phosphotransferase (180 aa).

Belongs to the KptA/TPT1 family.

In terms of biological role, removes the 2'-phosphate from RNA via an intermediate in which the phosphate is ADP-ribosylated by NAD followed by a presumed transesterification to release the RNA and generate ADP-ribose 1''-2''-cyclic phosphate (APPR&gt;P). May function as an ADP-ribosylase. The sequence is that of Probable RNA 2'-phosphotransferase from Thermococcus kodakarensis (strain ATCC BAA-918 / JCM 12380 / KOD1) (Pyrococcus kodakaraensis (strain KOD1)).